The primary structure comprises 508 residues: Cytochrome P450 monooxygenase pkfB (508 aa).

The helical transmembrane segment at 9–29 threads the bilayer; sequence FSLGLSQILVCLALLYAAIHI. N-linked (GlcNAc...) asparagine glycans are attached at residues Asn57 and Asn305. Cys450 is a heme binding site.

Belongs to the cytochrome P450 family. The cofactor is heme.

The protein localises to the membrane. It functions in the pathway secondary metabolite biosynthesis. Functionally, cytochrome P450 monooxygenase; part of the gene cluster that mediates the biosynthesis of aspernidine A, a prenylated isoindolinone. The starting point of the biosynthesis of aspernidin A is the production of orsellinaldehyde by the non-reducing polyketide synthase pkfA. Hydroxylation, methylation of one of the phenol groups, and prenylation, presumably catalyzed by the prenyltransferase pkfE, would be needed to yield aspernidine D. Subsequently, the cytochrome P450 monooxygenase pkfB is responsible for hydroxylation of aspernidine D to yield aspernidine E. The dehydrogenase pkfF may be responsible for further oxidation of aspernidine E to form a dialdehyde intermediate which is further transformed in a series of steps, some of which are enzyme-mediated, to generate aspernidine A. The possibility that additional enzymes outside of the cluster are involved in aspernidine A biosynthesis cannot be excluded. This is Cytochrome P450 monooxygenase pkfB from Emericella nidulans (strain FGSC A4 / ATCC 38163 / CBS 112.46 / NRRL 194 / M139) (Aspergillus nidulans).